Here is a 372-residue protein sequence, read N- to C-terminus: Tribbles homolog 1 (372 aa).

2 disordered regions span residues 1-23 (MRVG…ALLF) and 52-86 (ECSS…GSAP). Over residues 59 to 75 (YLSPPGSPCSPQPPPAA) the composition is skewed to pro residues. The region spanning 91–338 (IADYLLLPLA…APEILLHPWF (248 aa)) is the Protein kinase domain. Residues 355 to 360 (DQIVPE) carry the COP1-binding motif.

Belongs to the protein kinase superfamily. CAMK Ser/Thr protein kinase family. Tribbles subfamily. Monomer. Interacts (via protein kinase domain) with CEBPA. Interacts with COP1. In terms of tissue distribution, expressed in most human tissues with the highest levels in skeletal muscle, thyroid gland, pancreas, peripheral blood leukocytes, and bone marrow.

Its function is as follows. Adapter protein involved in protein degradation by interacting with COP1 ubiquitin ligase. The COP1-binding motif is masked by autoinhibitory interactions with the protein kinase domain. Serves to alter COP1 substrate specificity by directing the activity of COP1 toward CEBPA. Binds selectively the recognition sequence of CEBPA. Regulates myeloid cell differentiation by altering the expression of CEBPA in a COP1-dependent manner. Controls macrophage, eosinophil and neutrophil differentiation via the COP1-binding domain. Interacts with MAPK kinases and regulates activation of MAP kinases, but has no kinase activity. In Homo sapiens (Human), this protein is Tribbles homolog 1.